A 236-amino-acid chain; its full sequence is ATP synthase subunit a (236 aa).

5 helical membrane passes run 18–38 (SNLLMVTVASVIVFLIAVLCT), 80–100 (VTLLMYIFVSNMLGLPFAIVI), 112–132 (DPAITLTLAVMVVVLSHYYGI), 179–199 (ILLSLLAGLATTGFLGTIGAA), and 200–220 (IPMLLWQGFSIFVGAIQAFIF).

This sequence belongs to the ATPase A chain family. As to quaternary structure, F-type ATPases have 2 components, CF(1) - the catalytic core - and CF(0) - the membrane proton channel. CF(1) has five subunits: alpha(3), beta(3), gamma(1), delta(1), epsilon(1). CF(0) has three main subunits: a(1), b(2) and c(9-12). The alpha and beta chains form an alternating ring which encloses part of the gamma chain. CF(1) is attached to CF(0) by a central stalk formed by the gamma and epsilon chains, while a peripheral stalk is formed by the delta and b chains.

It is found in the cell membrane. Key component of the proton channel; it plays a direct role in the translocation of protons across the membrane. This chain is ATP synthase subunit a, found in Priestia megaterium (strain ATCC 12872 / QMB1551) (Bacillus megaterium).